The sequence spans 476 residues: Serine/threonine-protein kinase PBL36 (476 aa).

One can recognise a Protein kinase domain in the interval 126 to 412 (FRPESLLGEG…VEALKPLPNL (287 aa)). ATP is bound by residues 132–140 (LGEGGFGCV) and K164. Y209 carries the phosphotyrosine modification. Residue D259 is the Proton acceptor of the active site. 2 positions are modified to phosphoserine: S263 and S293. Phosphothreonine occurs at positions 294 and 299. Y307 carries the phosphotyrosine modification. The disordered stretch occupies residues 431 to 476 (NGVRTQGGGFVSRNGPPMRSLSSLNLPQASPYRYARQSPKPKGKEP).

The protein belongs to the protein kinase superfamily. Ser/Thr protein kinase family. Interacts with SD129. Post-translationally, phosphorylated by SD129 in response to the pathogen-associated molecular pattern (PAMP) 3-OH-C10:0, a medium-chain 3-hydroxy fatty acid.

The protein localises to the cell membrane. The catalysed reaction is L-seryl-[protein] + ATP = O-phospho-L-seryl-[protein] + ADP + H(+). It catalyses the reaction L-threonyl-[protein] + ATP = O-phospho-L-threonyl-[protein] + ADP + H(+). Functionally, involved in chitin-triggered immune signaling and is required for reactive oxygen species (ROS) production. Acts downstream of SD129 in defense signaling triggered by the pathogen-associated molecular pattern (PAMP) 3-OH-C10:0, a medium-chain 3-hydroxy fatty acid. In Arabidopsis thaliana (Mouse-ear cress), this protein is Serine/threonine-protein kinase PBL36.